A 199-amino-acid polypeptide reads, in one-letter code: UPF0637 protein LACR_1918 (199 aa).

It belongs to the UPF0637 family.

The chain is UPF0637 protein LACR_1918 from Lactococcus lactis subsp. cremoris (strain SK11).